The sequence spans 154 residues: Myoglobin (154 aa).

Residues 2–148 (GLSDGEWQLV…FRNDIAAKYK (147 aa)) form the Globin domain. Serine 4 is subject to Phosphoserine. Histidine 65 serves as a coordination point for nitrite. Histidine 65 serves as a coordination point for O2. The residue at position 68 (threonine 68) is a Phosphothreonine. Heme b is bound at residue histidine 94.

This sequence belongs to the globin family. In terms of assembly, monomeric.

It is found in the cytoplasm. It localises to the sarcoplasm. It carries out the reaction Fe(III)-heme b-[protein] + nitric oxide + H2O = Fe(II)-heme b-[protein] + nitrite + 2 H(+). The enzyme catalyses H2O2 + AH2 = A + 2 H2O. Functionally, monomeric heme protein which primary function is to store oxygen and facilitate its diffusion within muscle tissues. Reversibly binds oxygen through a pentacoordinated heme iron and enables its timely and efficient release as needed during periods of heightened demand. Depending on the oxidative conditions of tissues and cells, and in addition to its ability to bind oxygen, it also has a nitrite reductase activity whereby it regulates the production of bioactive nitric oxide. Under stress conditions, like hypoxia and anoxia, it also protects cells against reactive oxygen species thanks to its pseudoperoxidase activity. This Otolemur crassicaudatus (Brown greater galago) protein is Myoglobin (MB).